The chain runs to 111 residues: Large ribosomal subunit protein uL22 (111 aa).

The protein belongs to the universal ribosomal protein uL22 family. Part of the 50S ribosomal subunit.

In terms of biological role, this protein binds specifically to 23S rRNA; its binding is stimulated by other ribosomal proteins, e.g. L4, L17, and L20. It is important during the early stages of 50S assembly. It makes multiple contacts with different domains of the 23S rRNA in the assembled 50S subunit and ribosome. The globular domain of the protein is located near the polypeptide exit tunnel on the outside of the subunit, while an extended beta-hairpin is found that lines the wall of the exit tunnel in the center of the 70S ribosome. The polypeptide is Large ribosomal subunit protein uL22 (Chlamydia pneumoniae (Chlamydophila pneumoniae)).